The primary structure comprises 384 residues: Probable endopolygalacturonase C (384 aa).

The N-terminal stretch at 1–19 (MVRQLILISSLLAAVAVRA) is a signal peptide. A propeptide spanning residues 20–40 (APADPAHPMVTEAPDVNLVEK) is cleaved from the precursor. Cysteines 45 and 63 form a disulfide. PbH1 repeat units lie at residues 176 to 207 (STDL…DIGE) and 208 to 229 (STYI…AINS). The active-site Proton donor is D222. An intrachain disulfide couples C224 to C240. H244 is an active-site residue. 2 PbH1 repeats span residues 254–280 (RDDN…RIKT) and 288–310 (VSEV…VIEQ). N261 carries N-linked (GlcNAc...) asparagine glycosylation. Disulfide bonds link C349–C354 and C373–C382.

The protein belongs to the glycosyl hydrolase 28 family.

The protein resides in the secreted. It carries out the reaction (1,4-alpha-D-galacturonosyl)n+m + H2O = (1,4-alpha-D-galacturonosyl)n + (1,4-alpha-D-galacturonosyl)m.. In terms of biological role, involved in maceration and soft-rotting of plant tissue. Hydrolyzes the 1,4-alpha glycosidic bonds of de-esterified pectate in the smooth region of the plant cell wall. The chain is Probable endopolygalacturonase C (pgaC) from Aspergillus niger (strain ATCC MYA-4892 / CBS 513.88 / FGSC A1513).